A 495-amino-acid polypeptide reads, in one-letter code: ATP synthase subunit beta, chloroplastic (495 aa).

172 to 179 (GGAGVGKT) contacts ATP.

Belongs to the ATPase alpha/beta chains family. As to quaternary structure, F-type ATPases have 2 components, CF(1) - the catalytic core - and CF(0) - the membrane proton channel. CF(1) has five subunits: alpha(3), beta(3), gamma(1), delta(1), epsilon(1). CF(0) has four main subunits: a(1), b(1), b'(1) and c(9-12).

The protein resides in the plastid. Its subcellular location is the chloroplast thylakoid membrane. The catalysed reaction is ATP + H2O + 4 H(+)(in) = ADP + phosphate + 5 H(+)(out). Produces ATP from ADP in the presence of a proton gradient across the membrane. The catalytic sites are hosted primarily by the beta subunits. In Pteridium aquilinum (Bracken fern), this protein is ATP synthase subunit beta, chloroplastic.